The sequence spans 131 residues: Small ribosomal subunit protein eS17A (131 aa).

This sequence belongs to the eukaryotic ribosomal protein eS17 family. Component of the small ribosomal subunit (SSU). Mature yeast ribosomes consist of a small (40S) and a large (60S) subunit. The 40S small subunit contains 1 molecule of ribosomal RNA (18S rRNA) and at least 33 different proteins. The large 60S subunit contains 3 rRNA molecules (25S, 5.8S and 5S rRNA) and at least 46 different proteins.

Its subcellular location is the cytoplasm. Functionally, component of the ribosome, a large ribonucleoprotein complex responsible for the synthesis of proteins in the cell. The small ribosomal subunit (SSU) binds messenger RNAs (mRNAs) and translates the encoded message by selecting cognate aminoacyl-transfer RNA (tRNA) molecules. The large subunit (LSU) contains the ribosomal catalytic site termed the peptidyl transferase center (PTC), which catalyzes the formation of peptide bonds, thereby polymerizing the amino acids delivered by tRNAs into a polypeptide chain. The nascent polypeptides leave the ribosome through a tunnel in the LSU and interact with protein factors that function in enzymatic processing, targeting, and the membrane insertion of nascent chains at the exit of the ribosomal tunnel. This is Small ribosomal subunit protein eS17A (rps1701) from Schizosaccharomyces pombe (strain 972 / ATCC 24843) (Fission yeast).